Here is a 598-residue protein sequence, read N- to C-terminus: Membrane protein insertase YidC (598 aa).

Residues 7-27 traverse the membrane as a helical segment; it reads NYFIAIALSVLIVLGWQFLYM. Positions 37–76 are disordered; sequence AQEAQKAQQQTEQVQQPAAGGQTPAQTSGAAPSGQAAATA. The segment covering 40 to 76 has biased composition (low complexity); the sequence is AQKAQQQTEQVQQPAAGGQTPAQTSGAAPSGQAAATA. The next 4 membrane-spanning stretches (helical) occupy residues 377-397, 447-467, 492-512, and 538-558; these read FGVA…PLAS, WPVA…YITI, LFGL…WPLI, and WMPL…VIYW.

Belongs to the OXA1/ALB3/YidC family. Type 1 subfamily. In terms of assembly, interacts with the Sec translocase complex via SecD. Specifically interacts with transmembrane segments of nascent integral membrane proteins during membrane integration.

It is found in the cell inner membrane. Functionally, required for the insertion and/or proper folding and/or complex formation of integral membrane proteins into the membrane. Involved in integration of membrane proteins that insert both dependently and independently of the Sec translocase complex, as well as at least some lipoproteins. Aids folding of multispanning membrane proteins. In Rhizobium johnstonii (strain DSM 114642 / LMG 32736 / 3841) (Rhizobium leguminosarum bv. viciae), this protein is Membrane protein insertase YidC.